Reading from the N-terminus, the 621-residue chain is SH2B adapter protein 2 (621 aa).

Tyrosine 47 carries the post-translational modification Phosphotyrosine. Position 130 is a phosphoserine (serine 130). Positions 144 to 165 are disordered; that stretch reads RASPEPEGGATPKTTEPVSEPR. The 114-residue stretch at 186 to 299 folds into the PH domain; it reads DIQREGALRF…WVADIQGCVD (114 aa). Serine 303 is modified (phosphoserine). Positions 409 to 507 constitute an SH2 domain; it reads WFHGTLSRVK…SADITLRSYV (99 aa). 2 disordered regions span residues 507–528 and 548–609; these read VRAQ…PVPA and PPTS…ATLG. A compositionally biased stretch (low complexity) spans 552–570; it reads PSNGAGASSSSGSSSSATS. Serine 597 bears the Phosphoserine mark. Residue tyrosine 618 is modified to Phosphotyrosine.

It belongs to the SH2B adapter family. Homodimer. Interacts with KIT/c-KIT, SHC1, EPOR, PDGFR, VAV1 and VAV3. Interacts (via N-terminal region) with SHC1. Interacts (via the phosphorylated C-terminus) with GRB2. Interacts (via its SH2 domain) with EPOR, INSR and KIT. Interacts with GRB2 after B-cell antigen receptor stimulation. Interacts (via PH domain) with VAV3. Interacts with NTRK1, NTRK2 and NTRK3 (phosphorylated); after stimulation of the receptor by its extracellular ligand and subsequent autophosphorylation of the receptor. Binds INSR, GRB2, ASB6 and CAP. Insulin stimulation leads to dissociation of CAP. Binds CBS only when SH2B2/APS has become phosphorylated. INSR binding does not depend on the phosphorylation of SH2B2/APS. In terms of processing, phosphorylated on a tyrosine residue by NTRK1, NTRK2, NTRK3 and INSR after stimulation of the receptor by its extracellular ligand. Tyrosine phosphorylated by JAK2, KIT and other kinases activated by B-cell receptor in response to stimulation with cytokines, IL3, IL5, PDGF, IGF1, IGF2, CSF2/GM-CSF and cross-linking of the B-cell receptor complex. In terms of tissue distribution, detected in embryonic brain, spinal cord and cortical neurons.

The protein localises to the cytoplasm. It localises to the membrane. Functionally, adapter protein for several members of the tyrosine kinase receptor family. Involved in multiple signaling pathways. Binds to EPOR and suppresses EPO-induced STAT5 activation, possibly through a masking effect on STAT5 docking sites in EPOR. Suppresses PDGF-induced mitogenesis. Involved in stimulation of glucose uptake by insulin. Involved in coupling from immunoreceptor to Ras signaling. Acts as a negative regulator of cytokine signaling in collaboration with CBL. Induces cytoskeletal reorganization and neurite outgrowth in cultured neurons. The protein is SH2B adapter protein 2 (Sh2b2) of Rattus norvegicus (Rat).